We begin with the raw amino-acid sequence, 362 residues long: Protein-arginine kinase (362 aa).

Residues 24 to 255 form the Phosphagen kinase C-terminal domain; sequence IVLSSRIRLA…QQLIAQERMA (232 aa). ATP contacts are provided by residues 27–31, H92, R126, 177–181, and 208–213; these read SSRIR, RASVM, and RGTYGE. The short motif at 338–343 is the RDXXRA motif of the pArg binding pocket involved in allosteric regulation element; that stretch reads RDVRRA.

The protein belongs to the ATP:guanido phosphotransferase family.

It carries out the reaction L-arginyl-[protein] + ATP = N(omega)-phospho-L-arginyl-[protein] + ADP + H(+). Its activity is regulated as follows. Appears to be allosterically activated by the binding of pArg-containing polypeptides to the pArg-binding pocket localized in the C-terminal domain of McsB. Functionally, catalyzes the specific phosphorylation of arginine residues in a large number of proteins. Is part of the bacterial stress response system. Protein arginine phosphorylation has a physiologically important role and is involved in the regulation of many critical cellular processes, such as protein homeostasis, motility, competence, and stringent and stress responses, by regulating gene expression and protein activity. In Geobacillus sp. (strain WCH70), this protein is Protein-arginine kinase.